A 490-amino-acid polypeptide reads, in one-letter code: ATP synthase subunit beta, chloroplastic (490 aa).

Residue 170–177 (GGAGVGKT) participates in ATP binding.

This sequence belongs to the ATPase alpha/beta chains family. In terms of assembly, F-type ATPases have 2 components, CF(1) - the catalytic core - and CF(0) - the membrane proton channel. CF(1) has five subunits: alpha(3), beta(3), gamma(1), delta(1), epsilon(1). CF(0) has four main subunits: a(1), b(1), b'(1) and c(9-12).

The protein localises to the plastid. The protein resides in the chloroplast thylakoid membrane. It catalyses the reaction ATP + H2O + 4 H(+)(in) = ADP + phosphate + 5 H(+)(out). Its function is as follows. Produces ATP from ADP in the presence of a proton gradient across the membrane. The catalytic sites are hosted primarily by the beta subunits. In Cressa truxillensis (Spreading alkaliweed), this protein is ATP synthase subunit beta, chloroplastic.